The following is a 206-amino-acid chain: Inosine triphosphate pyrophosphatase (206 aa).

Position 21 to 26 (21 to 26) interacts with ITP; the sequence is TGNAKK. E49 serves as a coordination point for Mg(2+). Residues K61, 77–78, K94, 153–156, K176, and 181–182 contribute to the ITP site; these read DT, FGWD, and HR.

Belongs to the HAM1 NTPase family. As to quaternary structure, homodimer. The cofactor is Mg(2+). It depends on Mn(2+) as a cofactor.

It localises to the cytoplasm. It catalyses the reaction ITP + H2O = IMP + diphosphate + H(+). The enzyme catalyses dITP + H2O = dIMP + diphosphate + H(+). It carries out the reaction XTP + H2O = XMP + diphosphate + H(+). Its function is as follows. Pyrophosphatase that hydrolyzes non-canonical purine nucleotides such as inosine triphosphate (ITP), deoxyinosine triphosphate (dITP) or xanthosine 5'-triphosphate (XTP) to their respective monophosphate derivatives. The enzyme does not distinguish between the deoxy- and ribose forms. Probably excludes non-canonical purines from RNA and DNA precursor pools, thus preventing their incorporation into RNA and DNA and avoiding chromosomal lesions. This is Inosine triphosphate pyrophosphatase from Vitis vinifera (Grape).